The primary structure comprises 167 residues: Small ribosomal subunit protein uS5 (167 aa).

The S5 DRBM domain occupies 12–75; sequence IEDRVVAINR…ETARKSLIEV (64 aa).

The protein belongs to the universal ribosomal protein uS5 family. Part of the 30S ribosomal subunit. Contacts proteins S4 and S8.

Its function is as follows. With S4 and S12 plays an important role in translational accuracy. Located at the back of the 30S subunit body where it stabilizes the conformation of the head with respect to the body. In Pediococcus pentosaceus (strain ATCC 25745 / CCUG 21536 / LMG 10740 / 183-1w), this protein is Small ribosomal subunit protein uS5.